Here is a 100-residue protein sequence, read N- to C-terminus: uncharacterized protein (100 aa).

The region spanning 1-100 (MEPIEVFKAL…KLADFLKTEI (100 aa)) is the HTH arsR-type domain. A DNA-binding region (H-T-H motif) is located at residues 44–67 (VSQITDKLKMTQSTASQYLTILLR).

This is an uncharacterized protein from Bacillus subtilis (strain 168).